The sequence spans 413 residues: Putative competence-damage inducible protein (413 aa).

The protein belongs to the CinA family.

This Lacticaseibacillus paracasei (strain ATCC 334 / BCRC 17002 / CCUG 31169 / CIP 107868 / KCTC 3260 / NRRL B-441) (Lactobacillus paracasei) protein is Putative competence-damage inducible protein.